Here is a 255-residue protein sequence, read N- to C-terminus: Isoprenyl transferase (255 aa).

The active site involves Asp35. Position 35 (Asp35) interacts with Mg(2+). Residues 36-39 (GNGR), Trp40, Arg48, His52, and 80-82 (STE) each bind substrate. The active-site Proton acceptor is the Asn83. Residues Trp84, Arg86, Arg203, and 209–211 (RIS) contribute to the substrate site. Residue Glu222 coordinates Mg(2+).

Belongs to the UPP synthase family. In terms of assembly, homodimer. The cofactor is Mg(2+).

In terms of biological role, catalyzes the condensation of isopentenyl diphosphate (IPP) with allylic pyrophosphates generating different type of terpenoids. This is Isoprenyl transferase from Clostridium tetani (strain Massachusetts / E88).